A 179-amino-acid chain; its full sequence is NADH dehydrogenase [ubiquinone] 1 beta subcomplex subunit 9 (179 aa).

Ala2 carries the post-translational modification N-acetylalanine. A Phosphoserine modification is found at Ser85. The tract at residues 139 to 160 (QLQEETPVGGPRTEALPPARKQ) is disordered.

Belongs to the complex I LYR family. Mammalian complex I is composed of 45 different subunits.

The protein resides in the mitochondrion inner membrane. Its function is as follows. Accessory subunit of the mitochondrial membrane respiratory chain NADH dehydrogenase (Complex I), that is believed to be not involved in catalysis. Complex I functions in the transfer of electrons from NADH to the respiratory chain. The immediate electron acceptor for the enzyme is believed to be ubiquinone. This chain is NADH dehydrogenase [ubiquinone] 1 beta subcomplex subunit 9 (NDUFB9), found in Bos taurus (Bovine).